A 219-amino-acid polypeptide reads, in one-letter code: 7-cyano-7-deazaguanine synthase (219 aa).

An ATP-binding site is contributed by phenylalanine 10–leucine 20. Positions 186, 195, 198, and 201 each coordinate Zn(2+).

This sequence belongs to the QueC family. As to quaternary structure, homodimer. It depends on Zn(2+) as a cofactor.

It catalyses the reaction 7-carboxy-7-deazaguanine + NH4(+) + ATP = 7-cyano-7-deazaguanine + ADP + phosphate + H2O + H(+). It participates in purine metabolism; 7-cyano-7-deazaguanine biosynthesis. Its function is as follows. Catalyzes the ATP-dependent conversion of 7-carboxy-7-deazaguanine (CDG) to 7-cyano-7-deazaguanine (preQ(0)). The sequence is that of 7-cyano-7-deazaguanine synthase from Bacillus licheniformis (strain ATCC 14580 / DSM 13 / JCM 2505 / CCUG 7422 / NBRC 12200 / NCIMB 9375 / NCTC 10341 / NRRL NRS-1264 / Gibson 46).